A 1831-amino-acid polypeptide reads, in one-letter code: Transmembrane protein 131 homolog (1831 aa).

Positions 1-29 (MVPSIHKTSNRYRTIYFFLISLLITSTFA) are cleaved as a signal peptide. Residues 30–1169 (DQQAWPLPEE…QALPRPPFEN (1140 aa)) lie on the Lumenal side of the membrane. A papD-L domain region spans residues 118–294 (EMDPPMMDFG…QSKQIATLVL (177 aa)). Residues 1170–1190 (IMYYSCVTALIFCLVCVLACA) form a helical membrane-spanning segment. At 1191-1831 (YLEGDRAIAV…TDNENDEKNN (641 aa)) the chain is on the cytoplasmic side. Over residues 1223 to 1234 (STTTPVPTVPST) the composition is skewed to low complexity. 4 disordered regions span residues 1223 to 1252 (STTT…RPST), 1325 to 1516 (GQQK…PTDD), 1663 to 1759 (QMKR…VSNP), and 1800 to 1831 (WSSS…EKNN). Acidic residues predominate over residues 1338-1349 (PEFDEVEEEELA). 2 stretches are compositionally biased toward low complexity: residues 1394 to 1407 (PIIV…PPVQ) and 1435 to 1448 (QVPP…TPKT). Basic and acidic residues predominate over residues 1455 to 1467 (EPEKPIKPSEQKK). Positions 1480–1497 (TPSKARTPSKTPSQSNRA) are enriched in polar residues. Over residues 1500–1514 (PASSPAPIAPTSAPT) the composition is skewed to low complexity. 3 stretches are compositionally biased toward polar residues: residues 1669–1687 (SPSQ…SPQK), 1702–1733 (NQSS…NSIQ), and 1742–1758 (WGDN…TVSN). Residues 1808-1820 (PPTQQPSTSQMPQ) are compositionally biased toward low complexity. A compositionally biased stretch (acidic residues) spans 1822–1831 (TDNENDEKNN).

It belongs to the TMEM131 family. May interact (via PapD-L domain) with collagen proteins (via C-terminus); the interaction is direct and is involved in assembly and secretion of collagen. In terms of tissue distribution, predominantly expressed in the intestine and hypodermis.

It localises to the membrane. Its subcellular location is the endoplasmic reticulum membrane. Functionally, collagen binding transmembrane protein involved in collagen secretion, probably by recruiting the ER-to-Golgi transport complex TRAPPIII. Required for normal development. This is Transmembrane protein 131 homolog from Caenorhabditis elegans.